A 197-amino-acid chain; its full sequence is 3-isopropylmalate dehydratase small subunit (197 aa).

This sequence belongs to the LeuD family. LeuD type 1 subfamily. As to quaternary structure, heterodimer of LeuC and LeuD.

The enzyme catalyses (2R,3S)-3-isopropylmalate = (2S)-2-isopropylmalate. The protein operates within amino-acid biosynthesis; L-leucine biosynthesis; L-leucine from 3-methyl-2-oxobutanoate: step 2/4. In terms of biological role, catalyzes the isomerization between 2-isopropylmalate and 3-isopropylmalate, via the formation of 2-isopropylmaleate. The polypeptide is 3-isopropylmalate dehydratase small subunit (Corynebacterium glutamicum (strain R)).